Here is a 1005-residue protein sequence, read N- to C-terminus: Espin-like protein (1005 aa).

ANK repeat units lie at residues 1-31 (MEKQ…GPGI), 35-64 (LGAG…LPGN), 69-99 (NGAT…GLQD), 103-132 (SGVS…SATL), 136-166 (EGAR…SVNR), 170-200 (SGAS…DVHL), 204-234 (DGMS…GLTA), 238-267 (EGAT…PILR), and 270-299 (WGGT…DPSL). Disordered regions lie at residues 333–444 (LMTP…ERGQ) and 462–483 (LGAE…TEQA). Over residues 334-346 (MTPPPPPFPPPPL) the composition is skewed to pro residues. Polar residues predominate over residues 468-480 (AEAQDNGGSSGPT). A coiled-coil region spans residues 517 to 541 (LQLRRRCQEYESELGRLAAELQALL). Disordered regions lie at residues 616 to 644 (GDEK…AQRQ), 695 to 730 (RSGL…AAAG), and 773 to 795 (LRGQ…PRLG).

In terms of assembly, interacts with MYO3A (via C-terminus). Interacts with MYO3B (via C-terminus).

The protein localises to the cell projection. It localises to the stereocilium. Its function is as follows. Binds to but does not cross-link actin. Required for the formation and maintenance of inner ear hair cell stereocilia and staircase formation. Essential for normal hearing. This chain is Espin-like protein (ESPNL), found in Homo sapiens (Human).